Here is a 245-residue protein sequence, read N- to C-terminus: 1-(5-phosphoribosyl)-5-[(5-phosphoribosylamino)methylideneamino] imidazole-4-carboxamide isomerase (245 aa).

The active-site Proton acceptor is aspartate 7. Residue aspartate 129 is the Proton donor of the active site.

Belongs to the HisA/HisF family.

The protein localises to the cytoplasm. The catalysed reaction is 1-(5-phospho-beta-D-ribosyl)-5-[(5-phospho-beta-D-ribosylamino)methylideneamino]imidazole-4-carboxamide = 5-[(5-phospho-1-deoxy-D-ribulos-1-ylimino)methylamino]-1-(5-phospho-beta-D-ribosyl)imidazole-4-carboxamide. The protein operates within amino-acid biosynthesis; L-histidine biosynthesis; L-histidine from 5-phospho-alpha-D-ribose 1-diphosphate: step 4/9. The chain is 1-(5-phosphoribosyl)-5-[(5-phosphoribosylamino)methylideneamino] imidazole-4-carboxamide isomerase from Escherichia coli O127:H6 (strain E2348/69 / EPEC).